The following is a 287-amino-acid chain: Intermediate filament family orphan 2 (287 aa).

In terms of domain architecture, IF rod spans Met1–Asn254. Residues Lys248 to Ser287 form a disordered region. The segment covering Ser255–Gly267 has biased composition (low complexity). The segment covering Glu271 to Ser287 has biased composition (acidic residues).

The protein belongs to the intermediate filament family.

In Rattus norvegicus (Rat), this protein is Intermediate filament family orphan 2 (Iffo2).